A 60-amino-acid polypeptide reads, in one-letter code: Large ribosomal subunit protein uL30 (60 aa).

It belongs to the universal ribosomal protein uL30 family. As to quaternary structure, part of the 50S ribosomal subunit.

This Limosilactobacillus fermentum (strain NBRC 3956 / LMG 18251) (Lactobacillus fermentum) protein is Large ribosomal subunit protein uL30.